A 334-amino-acid polypeptide reads, in one-letter code: Probable type II restriction enzyme HindVP (334 aa).

It carries out the reaction Endonucleolytic cleavage of DNA to give specific double-stranded fragments with terminal 5'-phosphates.. A P subtype restriction enzyme that recognizes the double-stranded sequence 5'-GRCGYC-3'; the cleavage site is unknown. This Haemophilus influenzae (strain ATCC 51907 / DSM 11121 / KW20 / Rd) protein is Probable type II restriction enzyme HindVP (hindVRP).